The following is a 292-amino-acid chain: MHRELKRVFIVTKQAHAGAAALAADMQAWFAARGIEAATEENDTASALPDFARSASCIMVLGGDGTMLSVSRRAVGLDVPLLGVNLGKVGFLAEVSAAGWQQAFTRLAENGLTCSERLALHFAVSREGRCVFEGTAVNDVVLHRGVLARVINLGLGVDGEWLGDLRADGLIVSTPTGATGYAVSAGGPLVHPDMSVYAITPICPFLNNFHPMVLAGSMRFEIRILEGPQEVYVTQDGQECFALQAGDLVTVTQASRGLLFVAVEGSTYFTRLRAKGFVRDPRGRGRAVPASS.

The active-site Proton acceptor is Asp-64. NAD(+) contacts are provided by residues 64-65, 138-139, Arg-149, Arg-166, Asp-168, 179-184, and Gln-238; these read DG, ND, and TGYAVS.

This sequence belongs to the NAD kinase family. A divalent metal cation serves as cofactor.

It is found in the cytoplasm. It carries out the reaction NAD(+) + ATP = ADP + NADP(+) + H(+). In terms of biological role, involved in the regulation of the intracellular balance of NAD and NADP, and is a key enzyme in the biosynthesis of NADP. Catalyzes specifically the phosphorylation on 2'-hydroxyl of the adenosine moiety of NAD to yield NADP. The protein is NAD kinase of Oleidesulfovibrio alaskensis (strain ATCC BAA-1058 / DSM 17464 / G20) (Desulfovibrio alaskensis).